We begin with the raw amino-acid sequence, 200 residues long: Small ribosomal subunit protein uS4 (200 aa).

Residues 92–155 (SRLDNLVYRM…RNLTVVKEAL (64 aa)) enclose the S4 RNA-binding domain.

Belongs to the universal ribosomal protein uS4 family. Part of the 30S ribosomal subunit. Contacts protein S5. The interaction surface between S4 and S5 is involved in control of translational fidelity.

Functionally, one of the primary rRNA binding proteins, it binds directly to 16S rRNA where it nucleates assembly of the body of the 30S subunit. In terms of biological role, with S5 and S12 plays an important role in translational accuracy. The protein is Small ribosomal subunit protein uS4 of Shouchella clausii (strain KSM-K16) (Alkalihalobacillus clausii).